The sequence spans 90 residues: Protein LIM3 (90 aa).

The N-terminal stretch at 1–26 (MAAVKFLVCSVLLVVLATQSEIGLAQ) is a signal peptide. Disulfide bonds link cysteine 28–cysteine 65, cysteine 38–cysteine 54, cysteine 55–cysteine 80, and cysteine 67–cysteine 87.

The protein belongs to the A9/FIL1 family.

It localises to the secreted. This Lilium longiflorum (Trumpet lily) protein is Protein LIM3 (LIM3).